A 561-amino-acid polypeptide reads, in one-letter code: 7-keto 8-aminopelargonic acid transporter (561 aa).

Over 1-49 the chain is Cytoplasmic; that stretch reads MNRVGAVFLFVYERNFFLSIVPDRHRTEIRMSSSERSEVKFDKHFNWWS. A helical transmembrane segment spans residues 50–70; that stretch reads LLGIAFSLSCSWVGISASMAV. The Extracellular segment spans residues 71–77; the sequence is GIASGGP. A helical transmembrane segment spans residues 78 to 98; that stretch reads LLIIYGLIIAAFFSLMCGISL. Residues 99 to 160 are Cytoplasmic-facing; the sequence is GDFAAILPNS…NVEVSSKFQK (62 aa). Residues 161–181 traverse the membrane as a helical segment; sequence VSSMVVGLLNYFGAIFTTASI. At 182-204 the chain is on the extracellular side; the sequence is CSSLSMSCIGIHKLLHPDYELKH. Residues 205 to 225 traverse the membrane as a helical segment; that stretch reads WHVFVGYECINAVLTLFNIYS. The Cytoplasmic portion of the chain corresponds to 226-230; sequence TPLPY. A helical transmembrane segment spans residues 231-251; sequence ISQFGLYTSLLSFAMTFIICI. At 252–281 the chain is on the extracellular side; it reads VSRSDNTVDPWPKASNIFGSFDNQTGWNSS. The chain crosses the membrane as a helical span at residues 282-302; it reads GMAFVVGLVNPIWAFVGIDSA. The Cytoplasmic portion of the chain corresponds to 303–321; that stretch reads THMIDEVGYSKSRFLVPKV. A helical transmembrane segment spans residues 322-342; sequence IITTIIVGFVTSFIYCVGLFF. The Extracellular portion of the chain corresponds to 343-369; the sequence is CITDQTAVVESILPIVEIFYQATGNRN. The chain crosses the membrane as a helical span at residues 370-390; that stretch reads LSVFLQCMCITTGFVSGIASG. Topologically, residues 391-439 are cytoplasmic; it reads TWQSRILQSFGKSYAPFYKEGSLGNKSLKKLAVLTPGFKSPLYAHFLSQ. The chain crosses the membrane as a helical span at residues 440–460; the sequence is ICVTIIGCIFMGSSTAFNAII. Position 461 (Thr-461) is a topological domain, extracellular. Residues 462-482 form a helical membrane-spanning segment; it reads ACITLLLMSYAVPSFIFLFVI. Topologically, residues 483-507 are cytoplasmic; it reads KKEKFIHRIESDVNCVSRPNRRRMS. A helical transmembrane segment spans residues 508-528; that stretch reads MIPHIICILWTLFCLVFLSFP. Topologically, residues 529 to 540 are extracellular; sequence YTLPVTAGNMNY. The chain crosses the membrane as a helical span at residues 541–560; sequence TSVVYAVVFCIISIVVFPTC. Position 561 (Ile-561) is a topological domain, cytoplasmic.

It belongs to the amino acid-polyamine-organocation (APC) superfamily.

It is found in the membrane. Transport into the cell of 7-keto 8-aminopelargonic acid. This Saccharomyces cerevisiae (strain ATCC 204508 / S288c) (Baker's yeast) protein is 7-keto 8-aminopelargonic acid transporter (BIO5).